A 502-amino-acid polypeptide reads, in one-letter code: Carbon catabolite-derepressing protein kinase (502 aa).

The 256-residue stretch at 14-269 (YYLGKILGVG…IGEIRKHSWF (256 aa)) folds into the Protein kinase domain. ATP-binding positions include 20-28 (LGVGTFAKV) and lysine 43. The Proton acceptor role is filled by aspartate 140. Position 173 is a phosphothreonine; by autocatalysis (threonine 173). The UBA domain maps to 290–330 (MIDEDTLRDVVKLGYDKDHVCESLCNRLQNEETVAYYLLLD). Residues 453–501 (NSRLPAVIKFEIQLYKTKDDKYLLDMQRVTGPQLLFLEFCAAFLTNLRV) form the KA1 domain.

It belongs to the protein kinase superfamily. CAMK Ser/Thr protein kinase family. SNF1 subfamily.

It carries out the reaction L-seryl-[protein] + ATP = O-phospho-L-seryl-[protein] + ADP + H(+). The enzyme catalyses L-threonyl-[protein] + ATP = O-phospho-L-threonyl-[protein] + ADP + H(+). Its function is as follows. Essential for release from glucose repression. The chain is Carbon catabolite-derepressing protein kinase (RKIN1) from Secale cereale (Rye).